An 87-amino-acid chain; its full sequence is Small ribosomal subunit protein bS20 (87 aa).

The interval 1-27 is disordered; it reads MANIKSAKKRALQSEKRRQHNASRRSM.

It belongs to the bacterial ribosomal protein bS20 family.

Functionally, binds directly to 16S ribosomal RNA. This chain is Small ribosomal subunit protein bS20, found in Aeromonas hydrophila subsp. hydrophila (strain ATCC 7966 / DSM 30187 / BCRC 13018 / CCUG 14551 / JCM 1027 / KCTC 2358 / NCIMB 9240 / NCTC 8049).